Reading from the N-terminus, the 138-residue chain is MHVSKKEIEVRYAETDQMGIVYHANYLVWMEVGRTALIKDLGFLYSDMEKKGVLSPVVDINISYKKPLHYGETAVVHTWIEDYNGFKTVYGYHIYNPAGELSIKATSSHICVDKESFKPIQFRKAFPDWHTAYEKAKK.

Residue D16 is part of the active site.

Belongs to the 4-hydroxybenzoyl-CoA thioesterase family.

In terms of biological role, has acyl-CoA thioesterase activity. This Bacillus subtilis (strain 168) protein is Putative acyl-CoA thioesterase YneP (yneP).